A 450-amino-acid chain; its full sequence is 3-phosphoshikimate 1-carboxyvinyltransferase (450 aa).

Positions 28, 29, and 33 each coordinate 3-phosphoshikimate. Lys-28 contacts phosphoenolpyruvate. Phosphoenolpyruvate is bound by residues Gly-100 and Arg-128. 3-phosphoshikimate-binding residues include Ser-173, Gln-175, Asp-326, and Lys-353. Residue Gln-175 coordinates phosphoenolpyruvate. Asp-326 (proton acceptor) is an active-site residue. Positions 357 and 402 each coordinate phosphoenolpyruvate.

This sequence belongs to the EPSP synthase family. As to quaternary structure, monomer.

The protein resides in the cytoplasm. It carries out the reaction 3-phosphoshikimate + phosphoenolpyruvate = 5-O-(1-carboxyvinyl)-3-phosphoshikimate + phosphate. The protein operates within metabolic intermediate biosynthesis; chorismate biosynthesis; chorismate from D-erythrose 4-phosphate and phosphoenolpyruvate: step 6/7. Catalyzes the transfer of the enolpyruvyl moiety of phosphoenolpyruvate (PEP) to the 5-hydroxyl of shikimate-3-phosphate (S3P) to produce enolpyruvyl shikimate-3-phosphate and inorganic phosphate. The protein is 3-phosphoshikimate 1-carboxyvinyltransferase of Brucella abortus biovar 1 (strain 9-941).